The chain runs to 604 residues: Elongation factor 4 (604 aa).

The tr-type G domain occupies 10–191 (KNIRNFSIIA…KIITTIPAPS (182 aa)). GTP contacts are provided by residues 22 to 27 (DHGKST) and 138 to 141 (NKID).

This sequence belongs to the TRAFAC class translation factor GTPase superfamily. Classic translation factor GTPase family. LepA subfamily.

It is found in the cell inner membrane. It carries out the reaction GTP + H2O = GDP + phosphate + H(+). In terms of biological role, required for accurate and efficient protein synthesis under certain stress conditions. May act as a fidelity factor of the translation reaction, by catalyzing a one-codon backward translocation of tRNAs on improperly translocated ribosomes. Back-translocation proceeds from a post-translocation (POST) complex to a pre-translocation (PRE) complex, thus giving elongation factor G a second chance to translocate the tRNAs correctly. Binds to ribosomes in a GTP-dependent manner. The chain is Elongation factor 4 from Helicobacter acinonychis (strain Sheeba).